Here is a 145-residue protein sequence, read N- to C-terminus: 6-pyruvoyl tetrahydrobiopterin synthase (145 aa).

S19 carries the post-translational modification Phosphoserine; by PKG. H24 contacts Zn(2+). Residue S28 is modified to Phosphoserine. Catalysis depends on C43, which acts as the Proton acceptor. Positions 49 and 51 each coordinate Zn(2+). H90 serves as the catalytic Charge relay system. Y128 is modified (phosphotyrosine). Catalysis depends on E134, which acts as the Charge relay system.

The protein belongs to the PTPS family. Homohexamer formed of two homotrimers in a head to head fashion. It depends on Zn(2+) as a cofactor. Phosphorylation of Ser-19 is required for maximal enzyme activity.

It carries out the reaction 7,8-dihydroneopterin 3'-triphosphate = 6-pyruvoyl-5,6,7,8-tetrahydropterin + triphosphate + H(+). Its pathway is cofactor biosynthesis; tetrahydrobiopterin biosynthesis; tetrahydrobiopterin from 7,8-dihydroneopterin triphosphate: step 1/3. Its function is as follows. Involved in the biosynthesis of tetrahydrobiopterin, an essential cofactor of aromatic amino acid hydroxylases. Catalyzes the transformation of 7,8-dihydroneopterin triphosphate into 6-pyruvoyl tetrahydropterin. The sequence is that of 6-pyruvoyl tetrahydrobiopterin synthase (PTS) from Homo sapiens (Human).